The following is a 441-amino-acid chain: Platelet-activating factor acetylhydrolase (441 aa).

The signal sequence occupies residues 1 to 21; the sequence is MVPPKLHVLFCLCGCLAVVYP. Catalysis depends on serine 273, which acts as the Nucleophile. Active-site charge relay system residues include aspartate 296 and histidine 351. 2 N-linked (GlcNAc...) asparagine glycosylation sites follow: asparagine 423 and asparagine 433.

The protein belongs to the AB hydrolase superfamily. Lipase family. Post-translationally, N-glycosylated. Macrophage-derived PLA2G7 carries sialylated complex-type N-glycans that hinder its binding to HDL particles. In terms of tissue distribution, plasma. Secreted by macrophages (at protein level).

The protein resides in the secreted. Its subcellular location is the extracellular space. The enzyme catalyses a 1-O-alkyl-2-acetyl-sn-glycero-3-phosphocholine + H2O = a 1-O-alkyl-sn-glycero-3-phosphocholine + acetate + H(+). The catalysed reaction is 1-O-decyl-2-acetyl-sn-glycero-3-phosphocholine + H2O = 1-O-decyl-sn-glycero-3-phosphocholine + acetate + H(+). It catalyses the reaction 1-O-dodecyl-2-acetyl-sn-glycero-3-phosphocholine + H2O = 1-O-dodecyl-sn-glycero-3-phosphocholine + acetate + H(+). It carries out the reaction 1-O-tetradecyl-2-acetyl-sn-glycero-3-phosphocholine + H2O = 1-O-tetradecyl-sn-glycero-3-phosphocholine + acetate + H(+). The enzyme catalyses 1-O-hexadecyl-2-acetyl-sn-glycero-3-phosphocholine + H2O = 1-O-hexadecyl-sn-glycero-3-phosphocholine + acetate + H(+). The catalysed reaction is 1-O-octadecyl-2-acetyl-sn-glycero-3-phosphocholine + H2O = 1-O-octadecyl-sn-glycero-3-phosphocholine + acetate + H(+). It catalyses the reaction 1-hexadecanoyl-2-acetyl-sn-glycero-3-phosphocholine + H2O = 1-hexadecanoyl-sn-glycero-3-phosphocholine + acetate + H(+). It carries out the reaction 1-hexadecanoyl-2-propionyl-sn-glycero-3-phosphocholine + H2O = propanoate + 1-hexadecanoyl-sn-glycero-3-phosphocholine + H(+). The enzyme catalyses 1-hexadecanoyl-2-butanoyl-sn-glycero-3-phosphocholine + H2O = butanoate + 1-hexadecanoyl-sn-glycero-3-phosphocholine + H(+). The catalysed reaction is 1-hexadecanoyl-2-pentanoyl-sn-glycero-3-phosphocholine + H2O = pentanoate + 1-hexadecanoyl-sn-glycero-3-phosphocholine + H(+). It catalyses the reaction 1-hexadecanoyl-2-glutaroyl-sn-glycero-3-phosphocholine + H2O = glutarate + 1-hexadecanoyl-sn-glycero-3-phosphocholine + H(+). It carries out the reaction 1-hexadecanoyl-2-(5-oxopentanoyl)-sn-glycero-3-phosphocholine + H2O = 5-oxopentanoate + 1-hexadecanoyl-sn-glycero-3-phosphocholine + H(+). The enzyme catalyses 1-hexadecanoyl-2-(9-oxononanoyl)-sn-glycero-3-phosphocholine + H2O = 9-oxononanoate + 1-hexadecanoyl-sn-glycero-3-phosphocholine + H(+). The catalysed reaction is 1-hexadecanoyl-2-[9-hydroperoxy-(10E-octadecenoyl)]-sn-glycero-3-phosphocholine + H2O = 9-hydroperoxy-10E-octadecenoate + 1-hexadecanoyl-sn-glycero-3-phosphocholine + H(+). It catalyses the reaction 1-hexadecanoyl-2-(10-hydroperoxy-8E-octadecenoyl)-sn-glycero-3-phosphocholine + H2O = 10-hydroperoxy-(8E)-octadecenoate + 1-hexadecanoyl-sn-glycero-3-phosphocholine + H(+). Lipoprotein-associated calcium-independent phospholipase A2 involved in phospholipid catabolism during inflammatory and oxidative stress response. At the lipid-aqueous interface, hydrolyzes the ester bond of fatty acyl group attached at sn-2 position of phospholipids (phospholipase A2 activity). Specifically targets phospholipids with a short-chain fatty acyl group at sn-2 position. Can hydrolyze phospholipids with long fatty acyl chains, only if they carry oxidized functional groups. Hydrolyzes and inactivates platelet-activating factor (PAF, 1-O-alkyl-2-acetyl-sn-glycero-3-phosphocholine), a potent pro-inflammatory signaling lipid that acts through PTAFR on various innate immune cells. Hydrolyzes oxidatively truncated phospholipids carrying an aldehyde group at omega position, preventing their accumulation in low-density lipoprotein (LDL) particles and uncontrolled pro-inflammatory effects. As part of high-density lipoprotein (HDL) particles, can hydrolyze phospholipids having long-chain fatty acyl hydroperoxides at sn-2 position and protect against potential accumulation of these oxylipins in the vascular wall. Catalyzes the release from membrane phospholipids of F2-isoprostanes, lipid biomarkers of cellular oxidative damage. This is Platelet-activating factor acetylhydrolase (PLA2G7) from Homo sapiens (Human).